Consider the following 673-residue polypeptide: F420-dependent formate dehydrogenase subunit alpha (673 aa).

Residues 3–59 (FKIVNTICPYCGVGCGLGLVVKDGRVIGIHPNKRHPINEGKLCAKGNYCYQFIHSKD) form the 4Fe-4S Mo/W bis-MGD-type domain. C10, C13, C17, and C45 together coordinate [4Fe-4S] cluster. A non-standard amino acid (selenocysteine) is located at residue U131.

It belongs to the prokaryotic molybdopterin-containing oxidoreductase family. As to quaternary structure, dimer of an alpha (FdhA) and a beta (FdhB) subunit. [4Fe-4S] cluster serves as cofactor. The cofactor is Mo-bis(molybdopterin guanine dinucleotide). Zn(2+) is required as a cofactor.

It catalyses the reaction oxidized coenzyme F420-(gamma-L-Glu)(n) + formate + 2 H(+) = reduced coenzyme F420-(gamma-L-Glu)(n) + CO2. In terms of biological role, catalyzes the oxidation of formate to carbon dioxide, with coenzyme F420 as the electron acceptor. The sequence is that of F420-dependent formate dehydrogenase subunit alpha (fdhA) from Methanocaldococcus jannaschii (strain ATCC 43067 / DSM 2661 / JAL-1 / JCM 10045 / NBRC 100440) (Methanococcus jannaschii).